The primary structure comprises 424 residues: Histidine--tRNA ligase (424 aa).

The protein belongs to the class-II aminoacyl-tRNA synthetase family. Homodimer.

The protein localises to the cytoplasm. The enzyme catalyses tRNA(His) + L-histidine + ATP = L-histidyl-tRNA(His) + AMP + diphosphate + H(+). In Pectobacterium carotovorum subsp. carotovorum (strain PC1), this protein is Histidine--tRNA ligase.